The primary structure comprises 446 residues: Phosphoglucosamine mutase (446 aa).

Ser-100 acts as the Phosphoserine intermediate in catalysis. Mg(2+)-binding residues include Ser-100, Asp-241, Asp-243, and Asp-245. The residue at position 100 (Ser-100) is a Phosphoserine.

The protein belongs to the phosphohexose mutase family. Mg(2+) serves as cofactor. Post-translationally, activated by phosphorylation.

It carries out the reaction alpha-D-glucosamine 1-phosphate = D-glucosamine 6-phosphate. Functionally, catalyzes the conversion of glucosamine-6-phosphate to glucosamine-1-phosphate. This is Phosphoglucosamine mutase from Methylobacterium nodulans (strain LMG 21967 / CNCM I-2342 / ORS 2060).